A 189-amino-acid chain; its full sequence is MNGLPSAEAPGGAGCALAGLPPLPRGLSGLLNASGGSWRELERVYSQRSRIHDELSRAARAPDGPRHAAGAANAGPAAGPRRPVNLDSALAALRKEMVGLRQLDMSLLCQLWGLYESIQDYKHLCQDLSFCQDLSSSLHSDSSYPPDAGLSDDEEPPDASLPPDPPPLTVPQTHNARDQWLQDAFHISL.

Position 28 is a phosphoserine (Ser28). The segment at 54–83 is disordered; that stretch reads ELSRAARAPDGPRHAAGAANAGPAAGPRRP. The span at 67-83 shows a compositional bias: low complexity; the sequence is HAAGAANAGPAAGPRRP. The stretch at 86–114 is one LRR repeat; the sequence is LDSALAALRKEMVGLRQLDMSLLCQLWGL. Residues 141–175 are disordered; that stretch reads DSSYPPDAGLSDDEEPPDASLPPDPPPLTVPQTHN. Residues 159–169 are compositionally biased toward pro residues; that stretch reads ASLPPDPPPLT. At Ser188 the chain carries Phosphoserine.

Belongs to the FAM89 family. As to quaternary structure, interacts with SKI. Interacts (via LRR repeat) with CDC42BPA (via AGC-kinase C-terminal domain), CDC42BPB (via AGC-kinase C-terminal domain) and LIMK1 (via LIM zinc-binding domains). Forms a tripartite complex with CDC42BPA, CDC42BPB and LIMK1.

Its subcellular location is the cytoplasm. It is found in the cell projection. The protein resides in the lamellipodium. Its function is as follows. Negatively regulates TGF-beta-induced signaling; in cooperation with SKI prevents the translocation of SMAD2 from the nucleus to the cytoplasm in response to TGF-beta. Acts as an adapter that mediates the specific recognition of LIMK1 by CDC42BPA and CDC42BPB in the lamellipodia. LRAP25-mediated CDC42BPA/CDC42BPB targeting to LIMK1 and the lamellipodium results in LIMK1 activation and the subsequent phosphorylation of CFL1 which is important for lamellipodial F-actin regulation. The protein is Leucine repeat adapter protein 25 (FAM89B) of Homo sapiens (Human).